A 443-amino-acid chain; its full sequence is Thymidine phosphorylase (443 aa).

The protein belongs to the thymidine/pyrimidine-nucleoside phosphorylase family. In terms of assembly, homodimer.

The enzyme catalyses thymidine + phosphate = 2-deoxy-alpha-D-ribose 1-phosphate + thymine. The protein operates within pyrimidine metabolism; dTMP biosynthesis via salvage pathway; dTMP from thymine: step 1/2. The enzymes which catalyze the reversible phosphorolysis of pyrimidine nucleosides are involved in the degradation of these compounds and in their utilization as carbon and energy sources, or in the rescue of pyrimidine bases for nucleotide synthesis. This Shewanella pealeana (strain ATCC 700345 / ANG-SQ1) protein is Thymidine phosphorylase.